We begin with the raw amino-acid sequence, 325 residues long: Putative gluconeogenesis factor (325 aa).

It belongs to the gluconeogenesis factor family.

It localises to the cytoplasm. In terms of biological role, required for morphogenesis under gluconeogenic growth conditions. This Streptococcus pneumoniae serotype 4 (strain ATCC BAA-334 / TIGR4) protein is Putative gluconeogenesis factor.